Reading from the N-terminus, the 118-residue chain is Protein MT2260 (118 aa).

Belongs to the HesB/IscA family.

The sequence is that of Protein MT2260 from Mycobacterium tuberculosis (strain CDC 1551 / Oshkosh).